Here is a 902-residue protein sequence, read N- to C-terminus: Serine/threonine-protein kinase cbk1 (902 aa).

3 disordered regions span residues 1–22 (MSED…TCLK), 97–154 (ETHS…REDA), and 207–288 (QRMM…MVSP). Residues 97 to 118 (ETHSHSSDAEGTSHQDVSDRRN) are compositionally biased toward basic and acidic residues. A compositionally biased stretch (polar residues) spans 125–134 (RPSSHSQADS). 2 stretches are compositionally biased toward basic and acidic residues: residues 142–154 (QQKE…REDA) and 210–221 (MLDRGNPKRERS). Residues 222–239 (SGSSTPSSKSSPVDSVST) show a composition bias toward low complexity. The span at 240–259 (APTSVSPGSLAPSGSTNNDP) shows a compositional bias: polar residues. Basic and acidic residues predominate over residues 264–274 (KHIDSQADLPE). The Protein kinase domain maps to 378–732 (FEPLKILGRG…SPKYKQNDAI (355 aa)). Residues 384–392 (LGRGSFGVV) and lysine 432 contribute to the ATP site. The active-site Proton acceptor is the aspartate 527. Residues 771-831 (RGINWEQIHR…KWHPLGGKGG (61 aa)) form the AGC-kinase C-terminal domain. Residues 797 to 806 (YFDDGEHPSD) are compositionally biased toward basic and acidic residues. Residues 797–875 (YFDDGEHPSD…KKRLKEAKRA (79 aa)) are disordered. A compositionally biased stretch (acidic residues) spans 807-818 (REDDSSDSELDG). The span at 833-843 (HKPDKPLKADV) shows a compositional bias: basic and acidic residues.

The protein belongs to the protein kinase superfamily. STE Ser/Thr protein kinase family. COT1 subfamily.

It catalyses the reaction L-seryl-[protein] + ATP = O-phospho-L-seryl-[protein] + ADP + H(+). The catalysed reaction is L-threonyl-[protein] + ATP = O-phospho-L-threonyl-[protein] + ADP + H(+). Functionally, protein kinase that seems to play a role in the regulation of cell morphogenesis and proliferation. The chain is Serine/threonine-protein kinase cbk1 (cbk1) from Emericella nidulans (strain FGSC A4 / ATCC 38163 / CBS 112.46 / NRRL 194 / M139) (Aspergillus nidulans).